The following is a 465-amino-acid chain: Argininosuccinate lyase (465 aa).

It belongs to the lyase 1 family. Argininosuccinate lyase subfamily.

It is found in the cytoplasm. It carries out the reaction 2-(N(omega)-L-arginino)succinate = fumarate + L-arginine. Its pathway is amino-acid biosynthesis; L-arginine biosynthesis; L-arginine from L-ornithine and carbamoyl phosphate: step 3/3. In Rhodopseudomonas palustris (strain BisB5), this protein is Argininosuccinate lyase.